The primary structure comprises 610 residues: Dihydroxy-acid dehydratase (610 aa).

Asp81 serves as a coordination point for Mg(2+). Cys122 contributes to the [2Fe-2S] cluster binding site. Asp123 and Lys124 together coordinate Mg(2+). Lys124 is modified (N6-carboxylysine). Cys193 lines the [2Fe-2S] cluster pocket. Residue Glu489 coordinates Mg(2+). Ser515 acts as the Proton acceptor in catalysis.

The protein belongs to the IlvD/Edd family. In terms of assembly, homodimer. Requires [2Fe-2S] cluster as cofactor. The cofactor is Mg(2+).

The catalysed reaction is (2R)-2,3-dihydroxy-3-methylbutanoate = 3-methyl-2-oxobutanoate + H2O. It carries out the reaction (2R,3R)-2,3-dihydroxy-3-methylpentanoate = (S)-3-methyl-2-oxopentanoate + H2O. Its pathway is amino-acid biosynthesis; L-isoleucine biosynthesis; L-isoleucine from 2-oxobutanoate: step 3/4. It participates in amino-acid biosynthesis; L-valine biosynthesis; L-valine from pyruvate: step 3/4. In terms of biological role, functions in the biosynthesis of branched-chain amino acids. Catalyzes the dehydration of (2R,3R)-2,3-dihydroxy-3-methylpentanoate (2,3-dihydroxy-3-methylvalerate) into 2-oxo-3-methylpentanoate (2-oxo-3-methylvalerate) and of (2R)-2,3-dihydroxy-3-methylbutanoate (2,3-dihydroxyisovalerate) into 2-oxo-3-methylbutanoate (2-oxoisovalerate), the penultimate precursor to L-isoleucine and L-valine, respectively. The protein is Dihydroxy-acid dehydratase of Xylella fastidiosa (strain M12).